Consider the following 197-residue polypeptide: Protein lin-7 homolog C (197 aa).

The residue at position 2 (Ala-2) is an N-acetylalanine. The short motif at 2–13 is the Kinase interacting site element; the sequence is AALGEPVRLERD. The region spanning 10–65 is the L27 domain; the sequence is LERDICRAIELLEKLQRSGEVPPQKLQALQRVLQSEFCNAVREVYEHVYETVDISS. Residues 93-175 enclose the PDZ domain; sequence VVELPKTEEG…KVKLVVRYTP (83 aa).

Belongs to the lin-7 family. Forms a complex with CASK and APBA1 or CASKIN1. Component of the brain-specific heterotrimeric complex (LIN-10-LIN-2-LIN-7 complex) composed of at least APBA1, CASK, and LIN7, which associates with the motor protein KIF17 to transport vesicles along microtubules. Can also interact with other modular proteins containing protein-protein interaction domains like PALS1, PALS2, MPP7, DLG1, DLG2 and DLG3 through its L27 domain. Interacts with DLG4 and GRIN2B as well as CDH1 and CTNNB1, the channels KCNJ12/Kir2.2, KCNJ4/Kir2.3 and probably KCNJ2/Kir2.1 and SLC6A12/BGT-1 via its PDZ domain. The association of LIN7A with cadherin and beta-catenin is calcium-dependent, occurs at synaptic junctions and requires the actin cytoskeleton. Interacts with EGFR, ERBB2, ERBB3 and ERBB4 with both PDZ and KID domains. Associates with KIF17 via APBA1. Interacts with HTR4. Forms a tripartite complex composed of DLG1, MPP7 and LIN7 (LIN7A or LIN7C). Interacts with MAPK12.

Its subcellular location is the cell membrane. The protein resides in the basolateral cell membrane. It localises to the cell junction. It is found in the postsynaptic density membrane. The protein localises to the tight junction. Its subcellular location is the synapse. The protein resides in the synaptosome. Its function is as follows. Plays a role in establishing and maintaining the asymmetric distribution of channels and receptors at the plasma membrane of polarized cells. Forms membrane-associated multiprotein complexes that may regulate delivery and recycling of proteins to the correct membrane domains. The tripartite complex composed of LIN7 (LIN7A, LIN7B or LIN7C), CASK and APBA1 associates with the motor protein KIF17 to transport vesicles containing N-methyl-D-aspartate (NMDA) receptor subunit NR2B along microtubules. This complex may have the potential to couple synaptic vesicle exocytosis to cell adhesion in brain. Ensures the proper localization of GRIN2B (subunit 2B of the NMDA receptor) to neuronal postsynaptic density and may function in localizing synaptic vesicles at synapses where it is recruited by beta-catenin and cadherin. Required to localize Kir2 channels, GABA transporter (SLC6A12) and EGFR/ERBB1, ERBB2, ERBB3 and ERBB4 to the basolateral membrane of epithelial cells. This Bos taurus (Bovine) protein is Protein lin-7 homolog C (LIN7C).